Consider the following 225-residue polypeptide: Large ribosomal subunit protein bL25 (225 aa).

Residues 188–225 form a disordered region; it reads EEIEEAEAEAQATDADTATDDSEQTSEEQAEENKEDKE. Over residues 204–217 the composition is skewed to acidic residues; that stretch reads TATDDSEQTSEEQA.

The protein belongs to the bacterial ribosomal protein bL25 family. CTC subfamily. As to quaternary structure, part of the 50S ribosomal subunit; part of the 5S rRNA/L5/L18/L25 subcomplex. Contacts the 5S rRNA. Binds to the 5S rRNA independently of L5 and L18.

In terms of biological role, this is one of the proteins that binds to the 5S RNA in the ribosome where it forms part of the central protuberance. This Exiguobacterium sibiricum (strain DSM 17290 / CCUG 55495 / CIP 109462 / JCM 13490 / 255-15) protein is Large ribosomal subunit protein bL25.